The chain runs to 126 residues: MNELGRHILAEIYGCDGEILNNKDFIEKIMVDSALKAGAEVREVAFHKFSPQGISGVVIISESHLTIHTWPELGYAAVDVFTCGDRINPWDACNYMTEKFNAKNMTATEIKRGIFEQVVEVKASNI.

Ser63 (schiff-base intermediate with substrate; via pyruvic acid) is an active-site residue. A Pyruvic acid (Ser); by autocatalysis modification is found at Ser63. His68 serves as the catalytic Proton acceptor; for processing activity. Residue Cys83 is the Proton donor; for catalytic activity of the active site.

It belongs to the prokaryotic AdoMetDC family. Type 1 subfamily. As to quaternary structure, heterotetramer of two alpha and two beta chains arranged as a dimer of alpha/beta heterodimers. The cofactor is pyruvate. Is synthesized initially as an inactive proenzyme. Formation of the active enzyme involves a self-maturation process in which the active site pyruvoyl group is generated from an internal serine residue via an autocatalytic post-translational modification. Two non-identical subunits are generated from the proenzyme in this reaction, and the pyruvate is formed at the N-terminus of the alpha chain, which is derived from the carboxyl end of the proenzyme. The post-translation cleavage follows an unusual pathway, termed non-hydrolytic serinolysis, in which the side chain hydroxyl group of the serine supplies its oxygen atom to form the C-terminus of the beta chain, while the remainder of the serine residue undergoes an oxidative deamination to produce ammonia and the pyruvoyl group blocking the N-terminus of the alpha chain.

It carries out the reaction S-adenosyl-L-methionine + H(+) = S-adenosyl 3-(methylsulfanyl)propylamine + CO2. The protein operates within amine and polyamine biosynthesis; S-adenosylmethioninamine biosynthesis; S-adenosylmethioninamine from S-adenosyl-L-methionine: step 1/1. In terms of biological role, catalyzes the decarboxylation of S-adenosylmethionine to S-adenosylmethioninamine (dcAdoMet), the propylamine donor required for the synthesis of the polyamines spermine and spermidine from the diamine putrescine. This Clostridium kluyveri (strain NBRC 12016) protein is S-adenosylmethionine decarboxylase proenzyme.